We begin with the raw amino-acid sequence, 177 residues long: Large ribosomal subunit protein uL6 (177 aa).

This sequence belongs to the universal ribosomal protein uL6 family. Part of the 50S ribosomal subunit.

In terms of biological role, this protein binds to the 23S rRNA, and is important in its secondary structure. It is located near the subunit interface in the base of the L7/L12 stalk, and near the tRNA binding site of the peptidyltransferase center. This Vibrio cholerae serotype O1 (strain ATCC 39315 / El Tor Inaba N16961) protein is Large ribosomal subunit protein uL6.